A 739-amino-acid polypeptide reads, in one-letter code: Phosphoribosylformylglycinamidine synthase subunit PurL (739 aa).

The active site involves His54. The ATP site is built by Tyr57 and Lys96. A Mg(2+)-binding site is contributed by Glu98. Substrate contacts are provided by residues 99–102 and Arg121; that span reads SHNH. Residue His100 is the Proton acceptor of the active site. Mg(2+) is bound at residue Asp122. Gln245 is a substrate binding site. Asp273 is a binding site for Mg(2+). 317–319 contributes to the substrate binding site; the sequence is ESQ. ATP is bound by residues Asp500 and Gly537. Residue Asn538 coordinates Mg(2+). Residue Ser540 coordinates substrate.

Belongs to the FGAMS family. In terms of assembly, monomer. Part of the FGAM synthase complex composed of 1 PurL, 1 PurQ and 2 PurS subunits.

The protein localises to the cytoplasm. The catalysed reaction is N(2)-formyl-N(1)-(5-phospho-beta-D-ribosyl)glycinamide + L-glutamine + ATP + H2O = 2-formamido-N(1)-(5-O-phospho-beta-D-ribosyl)acetamidine + L-glutamate + ADP + phosphate + H(+). It functions in the pathway purine metabolism; IMP biosynthesis via de novo pathway; 5-amino-1-(5-phospho-D-ribosyl)imidazole from N(2)-formyl-N(1)-(5-phospho-D-ribosyl)glycinamide: step 1/2. Its function is as follows. Part of the phosphoribosylformylglycinamidine synthase complex involved in the purines biosynthetic pathway. Catalyzes the ATP-dependent conversion of formylglycinamide ribonucleotide (FGAR) and glutamine to yield formylglycinamidine ribonucleotide (FGAM) and glutamate. The FGAM synthase complex is composed of three subunits. PurQ produces an ammonia molecule by converting glutamine to glutamate. PurL transfers the ammonia molecule to FGAR to form FGAM in an ATP-dependent manner. PurS interacts with PurQ and PurL and is thought to assist in the transfer of the ammonia molecule from PurQ to PurL. The polypeptide is Phosphoribosylformylglycinamidine synthase subunit PurL (Exiguobacterium sp. (strain ATCC BAA-1283 / AT1b)).